An 87-amino-acid chain; its full sequence is Small ribosomal subunit protein uS17 (87 aa).

The protein belongs to the universal ribosomal protein uS17 family. As to quaternary structure, part of the 30S ribosomal subunit.

Its function is as follows. One of the primary rRNA binding proteins, it binds specifically to the 5'-end of 16S ribosomal RNA. The polypeptide is Small ribosomal subunit protein uS17 (Hydrogenovibrio crunogenus (strain DSM 25203 / XCL-2) (Thiomicrospira crunogena)).